We begin with the raw amino-acid sequence, 368 residues long: Protein pxr1 (368 aa).

Disordered stretches follow at residues 1-28 (MGLA…TDSF) and 161-339 (KEKA…PMGI). The span at 15 to 27 (DPNNTRWSGNTDS) shows a compositional bias: polar residues. In terms of domain architecture, G-patch spans 25–79 (TDSFGHRMMKSQGWTPGEYLGAKDAAHAEFHTEANASHIRVVIKDNTLGLGAKIG). Acidic residues predominate over residues 168 to 182 (SSEESDSSSDEEEEK). Composition is skewed to basic residues over residues 209–226 (SKKS…KSKK), 242–254 (KSKK…KSKS), 271–283 (KARK…KKRK), and 301–312 (SSKKSKKDKHKS). Residues 313 to 324 (PSTSKTSTKEST) show a composition bias toward low complexity. Residues 325–334 (PIVSESSGRS) show a composition bias toward polar residues.

The protein belongs to the PINX1 family.

The protein localises to the nucleus. It localises to the nucleolus. Involved in rRNA-processing at A0, A1 and A2 sites and negatively regulates telomerase. The protein is Protein pxr1 (pxr1) of Botryotinia fuckeliana (strain B05.10) (Noble rot fungus).